The primary structure comprises 96 residues: Secretoglobin family 2B member 2 (96 aa).

Residues 1–23 (MRVTSATCALLLALICSVQLGDA) form the signal peptide.

It belongs to the secretoglobin family.

The protein resides in the secreted. This Homo sapiens (Human) protein is Secretoglobin family 2B member 2 (SCGB2B2).